A 339-amino-acid chain; its full sequence is MSTAVINADDDHMEPTLQSILDQRSLRWIFVGGKGGVGKTTTSCSLAIQLAKVRRSVLLISTDPAHNLSDAFSQKFGKEARLIDGFDNLSAMEIDPNGSIQDLLAGQGENEGAGDMGGVGGMMQDLAFAIPGIDEAMSFAEVLKQVKSLSYETIIFDTAPTGHTLRFLQFPSVLEKALAKVSQLSSQYGPLLNGFLGSNGTLPNGQNLNEMMEKLETLRATISEVNTQFKDERLTTFVCVCIPEFLSLYETERMIQELASYGIDTHSIVVNQLLFPKPGSDCEQCTARRKMQKKYLDQIEELYDEFNVVKMPLLVEEVRGKEKLEKFSEMLVKPFVPPQ.

34 to 41 provides a ligand contact to ATP; that stretch reads KGGVGKTT. Asp-63 is a catalytic residue. Residues Glu-244 and Asn-271 each contribute to the ATP site. Zn(2+) contacts are provided by Cys-282 and Cys-285.

It belongs to the arsA ATPase family. Homodimer.

The protein resides in the cytoplasm. Its subcellular location is the endoplasmic reticulum. Its function is as follows. ATPase required for the post-translational delivery of tail-anchored (TA) proteins to the endoplasmic reticulum. Recognizes and selectively binds the transmembrane domain of TA proteins in the cytosol. This complex then targets to the endoplasmic reticulum by membrane-bound receptors, where the tail-anchored protein is released for insertion. This process is regulated by ATP binding and hydrolysis. ATP binding drives the homodimer towards the closed dimer state, facilitating recognition of newly synthesized TA membrane proteins. ATP hydrolysis is required for insertion. Subsequently, the homodimer reverts towards the open dimer state, lowering its affinity for the membrane-bound receptor, and returning it to the cytosol to initiate a new round of targeting. This Neurospora crassa (strain ATCC 24698 / 74-OR23-1A / CBS 708.71 / DSM 1257 / FGSC 987) protein is ATPase get3 (get3).